The following is a 425-amino-acid chain: Elongation factor 1-alpha (425 aa).

The 217-residue stretch at 5 to 221 (KPHMNLAVIG…NALSEPEKPT (217 aa)) folds into the tr-type G domain. Residues 14 to 21 (GHIDHGKS) form a G1 region. Position 14–21 (14–21 (GHIDHGKS)) interacts with GTP. Mg(2+) is bound at residue serine 21. The G2 stretch occupies residues 70–74 (GITID). The segment at 91–94 (DCPG) is G3. Residues 91 to 95 (DCPGH) and 146 to 149 (NKMD) each bind GTP. Residues 146–149 (NKMD) are G4. The tract at residues 185-187 (SAF) is G5.

This sequence belongs to the TRAFAC class translation factor GTPase superfamily. Classic translation factor GTPase family. EF-Tu/EF-1A subfamily.

It is found in the cytoplasm. The enzyme catalyses GTP + H2O = GDP + phosphate + H(+). Its function is as follows. GTP hydrolase that promotes the GTP-dependent binding of aminoacyl-tRNA to the A-site of ribosomes during protein biosynthesis. This is Elongation factor 1-alpha from Methanoculleus marisnigri (strain ATCC 35101 / DSM 1498 / JR1).